The primary structure comprises 100 residues: Aspartyl/glutamyl-tRNA(Asn/Gln) amidotransferase subunit C (100 aa).

Belongs to the GatC family. In terms of assembly, heterotrimer of A, B and C subunits.

It carries out the reaction L-glutamyl-tRNA(Gln) + L-glutamine + ATP + H2O = L-glutaminyl-tRNA(Gln) + L-glutamate + ADP + phosphate + H(+). The catalysed reaction is L-aspartyl-tRNA(Asn) + L-glutamine + ATP + H2O = L-asparaginyl-tRNA(Asn) + L-glutamate + ADP + phosphate + 2 H(+). Its function is as follows. Allows the formation of correctly charged Asn-tRNA(Asn) or Gln-tRNA(Gln) through the transamidation of misacylated Asp-tRNA(Asn) or Glu-tRNA(Gln) in organisms which lack either or both of asparaginyl-tRNA or glutaminyl-tRNA synthetases. The reaction takes place in the presence of glutamine and ATP through an activated phospho-Asp-tRNA(Asn) or phospho-Glu-tRNA(Gln). The polypeptide is Aspartyl/glutamyl-tRNA(Asn/Gln) amidotransferase subunit C (Rickettsia typhi (strain ATCC VR-144 / Wilmington)).